A 292-amino-acid chain; its full sequence is 33 kDa chaperonin (292 aa).

Intrachain disulfides connect cysteine 230/cysteine 232 and cysteine 263/cysteine 266.

The protein belongs to the HSP33 family. Under oxidizing conditions two disulfide bonds are formed involving the reactive cysteines. Under reducing conditions zinc is bound to the reactive cysteines and the protein is inactive.

Its subcellular location is the cytoplasm. Its function is as follows. Redox regulated molecular chaperone. Protects both thermally unfolding and oxidatively damaged proteins from irreversible aggregation. Plays an important role in the bacterial defense system toward oxidative stress. In Escherichia coli O7:K1 (strain IAI39 / ExPEC), this protein is 33 kDa chaperonin.